A 529-amino-acid chain; its full sequence is Bifunctional purine biosynthesis protein PurH (529 aa).

The region spanning 1–148 (MQQRRPVRRA…KNHKDVAIVV (148 aa)) is the MGS-like domain. K287 bears the N6-acetyllysine mark.

The protein belongs to the PurH family.

The catalysed reaction is (6R)-10-formyltetrahydrofolate + 5-amino-1-(5-phospho-beta-D-ribosyl)imidazole-4-carboxamide = 5-formamido-1-(5-phospho-D-ribosyl)imidazole-4-carboxamide + (6S)-5,6,7,8-tetrahydrofolate. It catalyses the reaction IMP + H2O = 5-formamido-1-(5-phospho-D-ribosyl)imidazole-4-carboxamide. It functions in the pathway purine metabolism; IMP biosynthesis via de novo pathway; 5-formamido-1-(5-phospho-D-ribosyl)imidazole-4-carboxamide from 5-amino-1-(5-phospho-D-ribosyl)imidazole-4-carboxamide (10-formyl THF route): step 1/1. It participates in purine metabolism; IMP biosynthesis via de novo pathway; IMP from 5-formamido-1-(5-phospho-D-ribosyl)imidazole-4-carboxamide: step 1/1. The protein is Bifunctional purine biosynthesis protein PurH of Escherichia coli O6:H1 (strain CFT073 / ATCC 700928 / UPEC).